The chain runs to 253 residues: ATP synthase subunit b 2 (253 aa).

Residues 9-27 (VLEIVNFLVLVWLLKRFLY) form a helical membrane-spanning segment.

The protein belongs to the ATPase B chain family. As to quaternary structure, F-type ATPases have 2 components, F(1) - the catalytic core - and F(0) - the membrane proton channel. F(1) has five subunits: alpha(3), beta(3), gamma(1), delta(1), epsilon(1). F(0) has three main subunits: a(1), b(2) and c(10-14). The alpha and beta chains form an alternating ring which encloses part of the gamma chain. F(1) is attached to F(0) by a central stalk formed by the gamma and epsilon chains, while a peripheral stalk is formed by the delta and b chains.

It localises to the cell inner membrane. In terms of biological role, f(1)F(0) ATP synthase produces ATP from ADP in the presence of a proton or sodium gradient. F-type ATPases consist of two structural domains, F(1) containing the extramembraneous catalytic core and F(0) containing the membrane proton channel, linked together by a central stalk and a peripheral stalk. During catalysis, ATP synthesis in the catalytic domain of F(1) is coupled via a rotary mechanism of the central stalk subunits to proton translocation. Component of the F(0) channel, it forms part of the peripheral stalk, linking F(1) to F(0). This chain is ATP synthase subunit b 2, found in Methylococcus capsulatus (strain ATCC 33009 / NCIMB 11132 / Bath).